Reading from the N-terminus, the 142-residue chain is Cytidine deaminase (142 aa).

In terms of domain architecture, CMP/dCMP-type deaminase spans R9–S139. Residue N50–E52 participates in substrate binding. C61 is a binding site for Zn(2+). The active-site Proton donor is the E63. Zn(2+)-binding residues include C96 and C99.

The protein belongs to the cytidine and deoxycytidylate deaminase family. As to quaternary structure, homodimer. Zn(2+) serves as cofactor.

The catalysed reaction is cytidine + H2O + H(+) = uridine + NH4(+). The enzyme catalyses 2'-deoxycytidine + H2O + H(+) = 2'-deoxyuridine + NH4(+). In terms of biological role, this enzyme scavenges exogenous and endogenous cytidine and 2'-deoxycytidine for UMP synthesis. This chain is Cytidine deaminase (CDD1), found in Saccharomyces cerevisiae (strain ATCC 204508 / S288c) (Baker's yeast).